The chain runs to 753 residues: Polyadenylate-binding protein, cytoplasmic and nuclear (753 aa).

The segment covering 1 to 26 (MSAEVSTTPAADNTVNGTPEATNAAA) has biased composition (polar residues). The segment at 1–52 (MSAEVSTTPAADNTVNGTPEATNAAATSAPEVTAVESASPSTTPSASQPHSA) is disordered. A compositionally biased stretch (low complexity) spans 37–52 (SASPSTTPSASQPHSA). 4 consecutive RRM domains span residues 52-130 (ASLY…WSQR), 140-217 (GNVF…HHIS), 233-310 (TNVY…RAQK), and 336-460 (VNLY…LAQR). Disordered stretches follow at residues 367 to 417 (VMRD…TEKK) and 602 to 645 (MGQG…REEV). Residues 379–417 (ESEKEKEKESNKENEKEGEEKTEEKPKESEEEPKKTEKK) are compositionally biased toward basic and acidic residues. The span at 605–631 (GIRGPGYGQGRGGAPVQGGPRPQGGRG) shows a compositional bias: gly residues. Residues 648-725 (TGGLTAQTLS…ALSVYDEYMK (78 aa)) form the PABC domain. The tract at residues 728 to 753 (GEGEAPAESAKPKEDAAETATEENKS) is disordered. Over residues 737 to 753 (AKPKEDAAETATEENKS) the composition is skewed to basic and acidic residues.

Belongs to the polyadenylate-binding protein type-1 family.

The protein localises to the cytoplasm. It localises to the nucleus. Binds the poly(A) tail of mRNA. Appears to be an important mediator of the multiple roles of the poly(A) tail in mRNA biogenesis, stability and translation. In the nucleus, involved in both mRNA cleavage and polyadenylation. Is also required for efficient mRNA export to the cytoplasm. Acts in concert with a poly(A)-specific nuclease (PAN) to affect poly(A) tail shortening, which may occur concomitantly with either nucleocytoplasmic mRNA transport or translational initiation. In the cytoplasm, stimulates translation initiation and regulates mRNA decay through translation termination-coupled poly(A) shortening, probably mediated by PAN. The protein is Polyadenylate-binding protein, cytoplasmic and nuclear (pab1) of Aspergillus fumigatus (strain ATCC MYA-4609 / CBS 101355 / FGSC A1100 / Af293) (Neosartorya fumigata).